Here is a 197-residue protein sequence, read N- to C-terminus: Putative glutathione-dependent formaldehyde-activating enzyme (197 aa).

Residues 22 to 171 enclose the CENP-V/GFA domain; it reads FPGGKLYCHC…LKSLGLENYD (150 aa). Zn(2+) is bound by residues cysteine 29, cysteine 31, cysteine 50, cysteine 52, cysteine 55, cysteine 97, and cysteine 100.

Belongs to the Gfa family. Zn(2+) serves as cofactor.

The enzyme catalyses S-(hydroxymethyl)glutathione = glutathione + formaldehyde. Its pathway is one-carbon metabolism; formaldehyde degradation; formate from formaldehyde (glutathione route): step 1/3. In terms of biological role, catalyzes the condensation of formaldehyde and glutathione to S-hydroxymethylglutathione. This is Putative glutathione-dependent formaldehyde-activating enzyme from Emericella nidulans (strain FGSC A4 / ATCC 38163 / CBS 112.46 / NRRL 194 / M139) (Aspergillus nidulans).